The chain runs to 156 residues: Small ribosomal subunit protein uS7 (156 aa).

It belongs to the universal ribosomal protein uS7 family. In terms of assembly, part of the 30S ribosomal subunit. Contacts proteins S9 and S11.

In terms of biological role, one of the primary rRNA binding proteins, it binds directly to 16S rRNA where it nucleates assembly of the head domain of the 30S subunit. Is located at the subunit interface close to the decoding center, probably blocks exit of the E-site tRNA. The polypeptide is Small ribosomal subunit protein uS7 (Symbiobacterium thermophilum (strain DSM 24528 / JCM 14929 / IAM 14863 / T)).